The chain runs to 292 residues: Beta-lactamase-like protein 2 homolog (292 aa).

His76, His78, Asp80, His81, His145, Asp163, and His198 together coordinate Zn(2+).

It belongs to the metallo-beta-lactamase superfamily. Glyoxalase II family.

This chain is Beta-lactamase-like protein 2 homolog, found in Drosophila melanogaster (Fruit fly).